The chain runs to 590 residues: UvrABC system protein C (590 aa).

The GIY-YIG domain maps to 14 to 91 (DQPGCYLMKD…IKKYDPKYNV (78 aa)). The region spanning 196 to 231 (NEIKKELEAKMAEAAEKLEFERAKEFRDQLAHIEST) is the UVR domain.

This sequence belongs to the UvrC family. In terms of assembly, interacts with UvrB in an incision complex.

It is found in the cytoplasm. Its function is as follows. The UvrABC repair system catalyzes the recognition and processing of DNA lesions. UvrC both incises the 5' and 3' sides of the lesion. The N-terminal half is responsible for the 3' incision and the C-terminal half is responsible for the 5' incision. The protein is UvrABC system protein C of Bacillus velezensis (strain DSM 23117 / BGSC 10A6 / LMG 26770 / FZB42) (Bacillus amyloliquefaciens subsp. plantarum).